We begin with the raw amino-acid sequence, 115 residues long: Toxin CSTX-9 (115 aa).

A signal peptide spans 1-20 (MKVLVICAVLFLAIFSNSSA). The propeptide occupies 21 to 47 (ETEDDFLEDESFEADDVIPFLAREQVR). 4 cysteine pairs are disulfide-bonded: Cys-53–Cys-68, Cys-60–Cys-77, Cys-67–Cys-95, and Cys-79–Cys-93.

Belongs to the neurotoxin 19 (CSTX) family. In terms of assembly, monomer. Interacts with CSTX-13 (AC P83919) (Kd=370 nM), but does not interact with CSTX-1 (AC P81694). In terms of tissue distribution, expressed by the venom gland.

It is found in the secreted. The protein localises to the target cell membrane. Its function is as follows. Synergistic toxin that induces or increases a cytolytic effect when combined with CSTX-1 (AC P81694) or CSTX-13 (AC P83919). Potassium ions and M-ctenitoxin-Cs1a (AC P83619) have also an effect on its activity. When alone, has no insecticidal activity. The polypeptide is Toxin CSTX-9 (Cupiennius salei (American wandering spider)).